A 612-amino-acid chain; its full sequence is Mineralocorticoid receptor (612 aa).

The tract at residues Gly1 to Val228 is modulating. Residues Cys229, Cys232, Cys246, Cys249, Cys269, Cys275, Cys285, and Cys288 each coordinate Zn(2+). 2 NR C4-type zinc fingers span residues Cys229–Cys249 and Cys269–Cys293. Positions Cys229–Met298 form a DNA-binding region, nuclear receptor. The tract at residues Asn299 to Asn349 is hinge. Residues Lys310–Ser348 form a disordered region. Low complexity predominate over residues Ser339–Ser348. The 243-residue stretch at Ser350–Ile592 folds into the NR LBD domain. Residues Asn398 and Gln404 each coordinate 21-hydroxyprogesterone. Aldosterone contacts are provided by Asn398 and Gln404. Progesterone contacts are provided by Asn398 and Gln404. Residues Lys410–Lys413 are important for coactivator binding. 21-hydroxyprogesterone is bound by residues Arg445 and Thr573. Residues Arg445 and Thr573 each contribute to the aldosterone site. Progesterone-binding residues include Arg445 and Thr573.

Belongs to the nuclear hormone receptor family. NR3 subfamily.

It localises to the cytoplasm. The protein localises to the nucleus. Receptor for both mineralocorticoids (MC) such as aldosterone and glucocorticoids (GC) such as corticosterone or cortisol. Binds to mineralocorticoid response elements (MRE) and transactivates target genes. The effect of MC is to increase ion and water transport and thus raise extracellular fluid volume and blood pressure and lower potassium levels. The sequence is that of Mineralocorticoid receptor (nr3c2) from Xenopus laevis (African clawed frog).